Consider the following 134-residue polypeptide: ATP synthase epsilon chain (134 aa).

It belongs to the ATPase epsilon chain family. In terms of assembly, F-type ATPases have 2 components, CF(1) - the catalytic core - and CF(0) - the membrane proton channel. CF(1) has five subunits: alpha(3), beta(3), gamma(1), delta(1), epsilon(1). CF(0) has three main subunits: a, b and c.

It is found in the cell membrane. In terms of biological role, produces ATP from ADP in the presence of a proton gradient across the membrane. This Listeria innocua serovar 6a (strain ATCC BAA-680 / CLIP 11262) protein is ATP synthase epsilon chain.